The following is a 276-amino-acid chain: Carboxysome assembly protein CcmO (276 aa).

BMC domains are found at residues 16 to 100 (ALGV…AVLP) and 120 to 204 (AIGL…DSLP). Disordered regions lie at residues 200 to 219 (MDSLPEPQSDSEAAQPLQLP) and 252 to 276 (QSALELAQETPLAEPLELPNPRDDQ).

This sequence belongs to the bacterial microcompartments protein family. Homooligomerizes, possibly as a trimer, interacts with CcmK2 in the carboxysome.

Its subcellular location is the carboxysome. Its function is as follows. Required for formation of the carboxysome, a polyhedral inclusion where RuBisCO (ribulose bisphosphate carboxylase, rbcL-rbcS) is sequestered. Required for recruitment of major shell protein CcmK2 to the pre-carboxysome. Suggested to be a carboxysome shell protein, but it is not detected in gels, mass spectrometry or by protein sequencing. Functionally, beta-carboxysome assembly initiates when soluble RuBisCO is condensed into a liquid matrix in a pre-carboxysome by the RbcS-like domains of probably both CcmM58 and CcmM35. CcmN interacts with the N-terminus of CcmM58, and then recruits the CcmK2 major shell protein via CcmN's encapsulation peptide. Shell formation requires CcmK proteins and CcmO. CcmL caps the otherwise elongated carboxysome. Once fully encapsulated carboxysomes are formed, they migrate within the cell probably via interactions with the cytoskeleton. The chain is Carboxysome assembly protein CcmO from Synechococcus elongatus (strain ATCC 33912 / PCC 7942 / FACHB-805) (Anacystis nidulans R2).